Here is a 280-residue protein sequence, read N- to C-terminus: uncharacterized protein (280 aa).

The transit peptide at Met1–Val51 directs the protein to the chloroplast.

This sequence belongs to the NAD(P)-dependent epimerase/dehydratase family.

It is found in the plastid. The protein resides in the chloroplast. It localises to the plastoglobule. This is an uncharacterized protein from Arabidopsis thaliana (Mouse-ear cress).